A 294-amino-acid polypeptide reads, in one-letter code: Keratin-like protein KRT222 (294 aa).

In terms of domain architecture, IF rod spans 1 to 150 (MELSQLLNEI…RLLEQEEIRY (150 aa)). The stretch at 1–151 (MELSQLLNEI…LLEQEEIRYY (151 aa)) forms a coiled coil.

It belongs to the intermediate filament family.

The sequence is that of Keratin-like protein KRT222 (Krt222) from Mus musculus (Mouse).